The sequence spans 294 residues: Chelated iron transport system membrane protein YfeC (294 aa).

8 consecutive transmembrane segments (helical) span residues 17 to 37 (AIWV…YLML), 51 to 71 (VVPG…GAFF), 93 to 113 (AIIG…VSLN), 140 to 160 (IIIL…LAVF), 169 to 189 (IGLS…ACTV), 194 to 214 (TVGA…AYLL), 221 to 241 (LLII…YLSF), and 246 to 266 (ATGG…FFFA).

This sequence belongs to the ABC-3 integral membrane protein family.

It localises to the cell inner membrane. Part of an ATP-driven transport system YfeABC for chelated iron. This Yersinia pestis protein is Chelated iron transport system membrane protein YfeC (yfeC).